The chain runs to 1066 residues: Vinculin (1066 aa).

The segment at 1–835 (MPVFHTRTIE…GAVAKVREAF (835 aa)) is N-terminal globular head. The residue at position 97 (Ser97) is a Phosphoserine. The segment at 168–208 (MTKMAKMIDERQQELTHQEHRVMLVNSMNTVKELLPVLISA) is talin-interaction. Lys173 bears the N6-acetyllysine mark. 3 repeat units span residues 259–369 (ASKD…KVEN), 370–479 (AARK…KTNR), and 480–589 (AVAN…QMQE). The tract at residues 259–589 (ASKDTEAMKR…LKDLKAQMQE (331 aa)) is 3 X 112 AA tandem repeats. Phosphoserine is present on residues Ser260, Ser272, Ser275, Ser290, Ser346, and Ser434. Lys496 carries the N6-acetyllysine modification. Position 537 is a phosphotyrosine (Tyr537). A phosphoserine mark is found at Ser574, Ser579, and Ser600. Residues Thr604 and Thr672 each carry the phosphothreonine modification. A Phosphoserine modification is found at Ser721. The interaction with ACTN4 stretch occupies residues 741 to 764 (MANIQPQMLVAGATSIARRANRIL). Phosphoserine is present on residues Ser795 and Ser809. Phosphotyrosine is present on Tyr822. A linker (Pro-rich) region spans residues 836-878 (QPQEPDFPPPPPDLEQLRLTDELAPPKPPLPEGEVPPPRPPPP). Residues 857 to 887 (ELAPPKPPLPEGEVPPPRPPPPEEKDEEFPE) are disordered. Residues 860-876 (PPKPPLPEGEVPPPRPP) show a composition bias toward pro residues. Residues 879–1066 (EEKDEEFPEQ…RWVRKTPWYQ (188 aa)) form a C-terminal tail region. Facilitates phospholipid membrane insertion regions lie at residues 935 to 978 (RLVR…KRIR) and 1052 to 1066 (AGFT…PWYQ). Residue Tyr1065 is modified to Phosphotyrosine; by SRC-type Tyr-kinases.

The protein belongs to the vinculin/alpha-catenin family. Exhibits self-association properties. Part of a complex composed of THSD1, PTK2/FAK1, TLN1 and VCL. Interacts with APBB1IP, NRAP and TLN1. Interacts with SYNM. Interacts with CTNNB1 and this interaction is necessary for its localization to the cell-cell junctions and for its function in regulating cell surface expression of E-cadherin. Interacts with SORBS1. Interacts with SYNM. Interacts with CTNNA1. Binds to ACTN4; this interaction triggers conformational changes. Interacts with FLII. Phosphorylated; on serines, threonines and tyrosines. Phosphorylation on Tyr-1065 in activated platelets affects head-tail interactions and cell spreading but has no effect on actin binding nor on localization to focal adhesion plaques. Post-translationally, acetylated; mainly by myristic acid but also by a small amount of palmitic acid.

The protein localises to the cell membrane. The protein resides in the cell junction. It localises to the adherens junction. It is found in the focal adhesion. Its subcellular location is the cytoplasm. The protein localises to the cytoskeleton. The protein resides in the sarcolemma. It localises to the cell projection. It is found in the podosome. Functionally, actin filament (F-actin)-binding protein involved in cell-matrix adhesion and cell-cell adhesion. Regulates cell-surface E-cadherin expression and potentiates mechanosensing by the E-cadherin complex. May also play important roles in cell morphology and locomotion. This Mus musculus (Mouse) protein is Vinculin (Vcl).